We begin with the raw amino-acid sequence, 54 residues long: Large ribosomal subunit protein bL33B (54 aa).

Belongs to the bacterial ribosomal protein bL33 family.

This Myxococcus xanthus (strain DK1622) protein is Large ribosomal subunit protein bL33B.